Here is a 263-residue protein sequence, read N- to C-terminus: Type III pantothenate kinase (263 aa).

Residue 6 to 13 (DVGNTNIK) participates in ATP binding. 108–111 (GSDR) lines the substrate pocket. The Proton acceptor role is filled by Asp110. Asp131 is a K(+) binding site. Thr134 contacts ATP. Position 187 (Thr187) interacts with substrate.

It belongs to the type III pantothenate kinase family. Homodimer. It depends on NH4(+) as a cofactor. K(+) serves as cofactor.

It is found in the cytoplasm. It carries out the reaction (R)-pantothenate + ATP = (R)-4'-phosphopantothenate + ADP + H(+). The protein operates within cofactor biosynthesis; coenzyme A biosynthesis; CoA from (R)-pantothenate: step 1/5. In terms of biological role, catalyzes the phosphorylation of pantothenate (Pan), the first step in CoA biosynthesis. This chain is Type III pantothenate kinase, found in Anaplasma phagocytophilum (strain HZ).